We begin with the raw amino-acid sequence, 513 residues long: GMP synthase [glutamine-hydrolyzing] (513 aa).

Residues 3–200 (SVLVLDFGSQ…LIDIAGITPD (198 aa)) form the Glutamine amidotransferase type-1 domain. C80 serves as the catalytic Nucleophile. Catalysis depends on residues H174 and E176. Positions 201-388 (WSPKHFIDHQ…LGIAEDILMR (188 aa)) constitute a GMPS ATP-PPase domain. 228 to 234 (SGGVDSS) provides a ligand contact to ATP.

As to quaternary structure, homodimer.

The catalysed reaction is XMP + L-glutamine + ATP + H2O = GMP + L-glutamate + AMP + diphosphate + 2 H(+). It participates in purine metabolism; GMP biosynthesis; GMP from XMP (L-Gln route): step 1/1. In terms of biological role, catalyzes the synthesis of GMP from XMP. In Chlorobium limicola (strain DSM 245 / NBRC 103803 / 6330), this protein is GMP synthase [glutamine-hydrolyzing].